Reading from the N-terminus, the 240-residue chain is Phosducin-like protein 3 (240 aa).

M1 is subject to N-acetylmethionine. The Phosducin domain maps to K27 to G181. Phosphoserine is present on residues S44, S65, S235, and S237. The segment at F92 to D240 is thioredoxin fold.

The protein belongs to the phosducin family. Interacts (via thioredoxin fold region) with KDR/VEGFR2 (via juxtamembrane domain). Forms ternary complexes with the chaperonin CCT complex and actin substrate, leading to inhibition of actin folding. Interacts with XIAP (via BIR 3 and RING domain). Interacts with HSP90AA1 and HSP90AB1. Post-translationally, N-terminal methionine acetylation destabilizes the protein. In terms of tissue distribution, expressed in blood vessels (at protein level).

It is found in the cytoplasm. The protein localises to the perinuclear region. It localises to the endoplasmic reticulum. Its function is as follows. Acts as a chaperone for the angiogenic VEGF receptor KDR/VEGFR2, increasing its abundance by inhibiting its ubiquitination and degradation. Inhibits the folding activity of the chaperonin-containing T-complex (CCT) which leads to inhibition of cytoskeletal actin folding. Acts as a chaperone during heat shock alongside HSP90 and HSP40/70 chaperone complexes. Modulates the activation of caspases during apoptosis. The chain is Phosducin-like protein 3 (Pdcl3) from Mus musculus (Mouse).